Consider the following 2368-residue polypeptide: Voltage-dependent P/Q-type calcium channel subunit alpha-1A (2368 aa).

Residues 1–100 (MARFGDEMPG…KYAKKITEWP (100 aa)) are Cytoplasmic-facing. The stretch at 65–365 (NPIPVRQNCL…LVLGVLSGEF (301 aa)) is one I repeat. Residues 101 to 119 (PFEYMILATIIANCIVLAL) form a helical membrane-spanning segment. Topologically, residues 120-138 (EQHLPDDDKTPMSERLDDT) are extracellular. The helical transmembrane segment at 139-156 (EPYFIGIFCFEAGIKIVA) threads the bilayer. Over 157–168 (LGFAFHKGSYLR) the chain is Cytoplasmic. The helical transmembrane segment at 169–184 (NGWNVMDFVVVLTGIL) threads the bilayer. Residues 185–192 (ATVGTEFD) lie on the Extracellular side of the membrane. A helical membrane pass occupies residues 193 to 211 (LRTLRAVRVLRPLKLVSGI). Over 212 to 230 (PSLQVVLKSIMKAMIPLLQ) the chain is Cytoplasmic. The chain crosses the membrane as a helical span at residues 231 to 250 (IGLLLFFAILIFAIIGLEFY). Residues 251 to 337 (MGKFHTTCFE…NSNDASGNTW (87 aa)) are Extracellular-facing. N285 carries an N-linked (GlcNAc...) asparagine glycan. Ca(2+) is bound at residue E320. A helical membrane pass occupies residues 338–362 (NWLYFIPLIIIGSFFMLNLVLGVLS). At 363–489 (GEFAKERERV…FYIRRMVKTQ (127 aa)) the chain is on the cytoplasmic side. The tract at residues 385–402 (QQIERELNGYMEWISKAE) is binding to the beta subunit. T411 is subject to Phosphothreonine. 2 positions are modified to phosphoserine: S450 and S453. One copy of the II repeat lies at 475-719 (ERRMRFYIRR…VFLAIAVDNL (245 aa)). A helical membrane pass occupies residues 490–509 (AFYWTVLSLVALNTLCVAIV). The Extracellular segment spans residues 510–523 (HYNQPEWLSDFLYY). A helical transmembrane segment spans residues 524 to 543 (AEFIFLGLFMSEMFIKMYGL). Residues 544 to 551 (GTRPYFHS) lie on the Cytoplasmic side of the membrane. Residues 552–570 (SFNCFDCGVIIGSIFEVIW) form a helical membrane-spanning segment. Residues 571 to 580 (AVIKPGTSFG) lie on the Extracellular side of the membrane. Residues 581-599 (ISVLRALRLLRIFKVTKYW) form a helical membrane-spanning segment. The Cytoplasmic segment spans residues 600–618 (ASLRNLVVSLLNSMKSIIS). A helical membrane pass occupies residues 619–638 (LLFLLFLFIVVFALLGMQLF). Over 639–691 (GGQFNFDEGTPPTNFDTFPAAIMTVFQILTGEDWNEVMYDGIKSQGGVQGGMV) the chain is Extracellular. E670 is a Ca(2+) binding site. A helical transmembrane segment spans residues 692–716 (FSIYFIVLTLFGNYTLLNVFLAIAV). Over 717–1190 (DNLANAQELT…TNPLRRLCHY (474 aa)) the chain is Cytoplasmic. S752 and S755 each carry phosphoserine. The tract at residues 762–781 (AVKEQQKNQKPTKSVWEQRT) is disordered. Polar residues predominate over residues 769–779 (NQKPTKSVWEQ). S792 carries the phosphoserine modification. Disordered stretches follow at residues 823-1117 (PLVV…RKPE) and 1137-1170 (VNKNANPDPLPKKEEEKKEEEEADPGEDGPKPMP). Composition is skewed to basic and acidic residues over residues 850–862 (RPRESARDPDARR), 871–924 (APGR…EGEP), and 932–958 (RPGDEPDDRPERRPRPRDATRPARAAD). Residues S1038, S1042, and S1051 each carry the phosphoserine modification. Residues 1056–1073 (GNSTNPGPALATNPQNAA) show a composition bias toward polar residues. Residues 1074–1083 (SRRTPNNPGN) show a composition bias toward low complexity. The segment covering 1094-1111 (ENSLIVTNPSSTQPNSAK) has biased composition (polar residues). The segment covering 1153–1163 (KKEEEEADPGE) has biased composition (acidic residues). The III repeat unit spans residues 1182 to 1465 (NPLRRLCHYI…IFVALIIITF (284 aa)). A helical membrane pass occupies residues 1191 to 1214 (ILNLRYFEMCILMVIAMSSIALAA). The Extracellular portion of the chain corresponds to 1215 to 1231 (EDPVQPNAPRNNVLRYF). The chain crosses the membrane as a helical span at residues 1232–1251 (DYVFTGVFTFEMVIKMIDLG). At 1252 to 1258 (LVLHQGA) the chain is on the cytoplasmic side. A helical transmembrane segment spans residues 1259-1282 (YFRDLWNILDFIVVSGALVAFAFT). The Extracellular segment spans residues 1283-1293 (GNSKGKDINTI). The helical transmembrane segment at 1294–1311 (KSLRVLRVLRPLKTIKRL) threads the bilayer. Topologically, residues 1312–1330 (PKLKAVFDCVVNSLKNVFN) are cytoplasmic. Residues 1331–1350 (ILIVYMLFMFIFAVVAVQLF) traverse the membrane as a helical segment. At 1351 to 1437 (KGKFFHCTDE…QGPSPGYRME (87 aa)) the chain is on the extracellular side. E1411 contributes to the Ca(2+) binding site. A helical transmembrane segment spans residues 1438-1462 (MSIFYVVYFVVFPFFFVNIFVALII). The Cytoplasmic segment spans residues 1463–1518 (ITFQEQGDKMMEEYSLEKNERACIDFAISAKPLTRHMPQNKQSFQYRMWQFVVSPP). One copy of the IV repeat lies at 1502–1765 (NKQSFQYRMW…LFVAVIMDNF (264 aa)). The helical transmembrane segment at 1519-1537 (FEYTIMAMIALNTIVLMMK) threads the bilayer. Topologically, residues 1538–1551 (FYGASVAYENALRV) are extracellular. Residues 1552-1573 (FNIVFTSLFSLECVLKVMAFGI) traverse the membrane as a helical segment. Topologically, residues 1574–1580 (LNYFRDA) are cytoplasmic. A helical transmembrane segment spans residues 1581–1600 (WNIFDFVTVLGSITDILVTE). The Extracellular segment spans residues 1601-1607 (FGNNFIN). An N-linked (GlcNAc...) asparagine glycan is attached at N1607. The helical transmembrane segment at 1608-1626 (LSFLRLFRAARLIKLLRQG) threads the bilayer. The Cytoplasmic portion of the chain corresponds to 1627-1645 (YTIRILLWTFVQSFKALPY). Residues 1646-1665 (VCLLIAMLFFIYAIIGMQVF) form a helical membrane-spanning segment. Residues 1666–1737 (GNIGIDGEDE…ILTADCGNEF (72 aa)) are Extracellular-facing. Residues 1738 to 1763 (AYFYFVSFIFLCSFLMLNLFVAVIMD) traverse the membrane as a helical segment. Topologically, residues 1764–2368 (NFEYLTRDSS…AYSESEDDWC (605 aa)) are cytoplasmic. T1935 carries the phosphothreonine modification. Residues 1940-2368 (QRMEPPSPTQ…AYSESEDDWC (429 aa)) form a disordered region. 2 stretches are compositionally biased toward polar residues: residues 1948-1963 (TQEGGPSQNALPSTQL) and 1981-1997 (SWVTQRAQEMFQKTGTW). S1998, S2016, S2028, S2030, S2071, and S2091 each carry phosphoserine. The span at 2008–2017 (PNSQPNSQSV) shows a compositional bias: polar residues. Over residues 2018–2034 (EMREMGTDGYSDSEHYL) the composition is skewed to basic and acidic residues. Polar residues predominate over residues 2063-2073 (DLSTISDTSPM). Composition is skewed to basic and acidic residues over residues 2085–2102 (RRLDDYSLERVPPEENQR) and 2143–2153 (PSKDRDQDRGR). Over residues 2154 to 2172 (PKDRKHRPHHHHHHHHHHP) the composition is skewed to basic residues. The span at 2173–2209 (PAPDRDRYAQERPDTGRARAREQRWSRSPSEGREHTT) shows a compositional bias: basic and acidic residues. Residues 2213–2231 (GSSSVSGSPAPSTSGTSTP) are compositionally biased toward low complexity. Residues 2289-2305 (EGPRPRGADYTEPDSPR) show a composition bias toward basic and acidic residues.

This sequence belongs to the calcium channel alpha-1 subunit (TC 1.A.1.11) family. CACNA1A subfamily. As to quaternary structure, voltage-dependent calcium channels are multisubunit complexes, consisting of alpha-1, alpha-2, beta and delta subunits in a 1:1:1:1 ratio. The channel activity is directed by the pore-forming and voltage-sensitive alpha-1 subunit. In many cases, this subunit is sufficient to generate voltage-sensitive calcium channel activity. The auxiliary subunits beta and alpha-2/delta linked by a disulfide bridge regulate the channel activity. Interacts with CABP1. Interacts with the spider omega-agatoxin-IVA (AC P30288). Interacts with TSPOAP1. In terms of tissue distribution, brain specific; mainly found in the cerebellum, olfactory bulb, cerebral cortex, hippocampus, and inferior colliculus. In the hippocampus, expression occurs in pyramidal and granule neurons, as well as in interneurons. Purkinje cells contain predominantly P-type VSCC, the Q-type being a prominent calcium current in cerebellar granule cells.

The protein resides in the cell membrane. It catalyses the reaction Ca(2+)(in) = Ca(2+)(out). Its function is as follows. Voltage-sensitive calcium channels (VSCC) mediate the entry of calcium ions into excitable cells and are also involved in a variety of calcium-dependent processes, including muscle contraction, hormone or neurotransmitter release, gene expression, cell motility, cell division and cell death. The isoform alpha-1A gives rise to P and/or Q-type calcium currents. P/Q-type calcium channels belong to the 'high-voltage activated' (HVA) group and are specifically blocked by the spider omega-agatoxin-IVA (AC P54282). They are however insensitive to dihydropyridines (DHP). This chain is Voltage-dependent P/Q-type calcium channel subunit alpha-1A, found in Mus musculus (Mouse).